Consider the following 113-residue polypeptide: Inner membrane protein YiaB (113 aa).

Residues 1-9 (MKTSKTVAK) are Cytoplasmic-facing. A helical membrane pass occupies residues 10–20 (LLFVVGALVYL). At 21-33 (VGLWISCPLLSGK) the chain is on the periplasmic side. Residues 34–51 (GYFLGVLMTATFGNYAYL) form a helical membrane-spanning segment. Residues 52-61 (RAEKLGQLDD) are Cytoplasmic-facing. Residues 62–82 (FFTHICQLVALITIGLLFIGV) form a helical membrane-spanning segment. Over 83–84 (LN) the chain is Periplasmic. Residues 85 to 105 (APINTYEMVIYPIAFFVCLFG) traverse the membrane as a helical segment. Residues 106–113 (QMRLFRSA) lie on the Cytoplasmic side of the membrane.

It is found in the cell inner membrane. The protein is Inner membrane protein YiaB (yiaB) of Escherichia coli (strain K12).